A 385-amino-acid polypeptide reads, in one-letter code: ADP,ATP carrier protein 2, mitochondrial (385 aa).

Residues 1–74 constitute a mitochondrion transit peptide; the sequence is MVEQTQHPTI…ATTTSPVFVQ (74 aa). Solcar repeat units follow at residues 82 to 175, 187 to 280, and 288 to 374; these read TNFA…FKRL, KWFA…VKPV, and DSFF…LQLI. 5 consecutive transmembrane segments (helical) span residues 84-111, 152-176, 185-205, 256-277, and 291-311; these read FAID…VKLL, TANV…KRLF, YWKW…SSLL, FNIS…YDSV, and FASF…SYPI. The ADP site is built by Arg157 and Lys169. Residue Arg315 coordinates ADP. Residues 315–320 are important for transport activity; the sequence is RRRMMM. The short motif at 315 to 320 is the Nucleotide carrier signature motif element; that stretch reads RRRMMM. A helical membrane pass occupies residues 351–371; that stretch reads AGANILRAVAGAGVLAGYDKL.

Belongs to the mitochondrial carrier (TC 2.A.29) family. Monomer.

It localises to the mitochondrion inner membrane. It carries out the reaction ADP(in) + ATP(out) = ADP(out) + ATP(in). The matrix-open state (m-state) is inhibited by the membrane-permeable bongkrekic acid (BKA). The cytoplasmic-open state (c-state) is inhibited by the membrane-impermeable toxic inhibitor carboxyatractyloside (CATR). Its function is as follows. ADP:ATP antiporter that mediates import of ADP into the mitochondrial matrix for ATP synthesis, and export of ATP out to fuel the cell. Cycles between the cytoplasmic-open state (c-state) and the matrix-open state (m-state): operates by the alternating access mechanism with a single substrate-binding site intermittently exposed to either the cytosolic (c-state) or matrix (m-state) side of the inner mitochondrial membrane. The polypeptide is ADP,ATP carrier protein 2, mitochondrial (AAC2) (Arabidopsis thaliana (Mouse-ear cress)).